The primary structure comprises 337 residues: Transaldolase (337 aa).

The short motif at methionine 1–arginine 10 is the Nuclear localization signal element. An N6-acetyllysine modification is found at lysine 115. The Schiff-base intermediate with substrate role is filled by lysine 142. Lysine 219 bears the N6-acetyllysine mark. 2 positions are modified to phosphoserine: serine 237 and serine 256. 3 positions are modified to N6-acetyllysine: lysine 269, lysine 286, and lysine 321.

This sequence belongs to the transaldolase family. Type 1 subfamily. Homodimer. Interacts with KPNA1 and KPNA4.

It is found in the nucleus. It localises to the cytoplasm. The catalysed reaction is D-sedoheptulose 7-phosphate + D-glyceraldehyde 3-phosphate = D-erythrose 4-phosphate + beta-D-fructose 6-phosphate. Its pathway is carbohydrate degradation; pentose phosphate pathway; D-glyceraldehyde 3-phosphate and beta-D-fructose 6-phosphate from D-ribose 5-phosphate and D-xylulose 5-phosphate (non-oxidative stage): step 2/3. In terms of biological role, catalyzes the rate-limiting step of the non-oxidative phase in the pentose phosphate pathway. Catalyzes the reversible conversion of sedheptulose-7-phosphate and D-glyceraldehyde 3-phosphate into erythrose-4-phosphate and beta-D-fructose 6-phosphate. This chain is Transaldolase (TALDO1), found in Cricetulus griseus (Chinese hamster).